The primary structure comprises 808 residues: Phospholipase D alpha 1 (808 aa).

The C2 domain occupies 1–125 (MAKTLLHGTL…LEGEEVDKWV (125 aa)). Aspartate 186 is a binding site for Ca(2+). A PLD phosphodiesterase 1 domain is found at 326 to 364 (TIFTHHQKIVVVDSEMPTSGSENRRVVSFVGGIDLCDGR). Residues histidine 331, lysine 333, and aspartate 338 contribute to the active site. Histidine 331 is a binding site for a 1,2-diacyl-sn-glycero-3-phosphate. Ca(2+)-binding residues include histidine 370 and histidine 404. One can recognise a PLD phosphodiesterase 2 domain in the interval 654-681 (FMIYVHAKMMIVDDEYIIIGSANINQRS). Active-site residues include histidine 659, lysine 661, and aspartate 666. Histidine 659 contacts a 1,2-diacyl-sn-glycero-3-phosphate. Glutamate 720 is a Ca(2+) binding site.

It belongs to the phospholipase D family. C2-PLD subfamily. The cofactor is Ca(2+).

The catalysed reaction is a 1,2-diacyl-sn-glycero-3-phosphocholine + H2O = a 1,2-diacyl-sn-glycero-3-phosphate + choline + H(+). Functionally, hydrolyzes glycerol-phospholipids at the terminal phosphodiesteric bond. Plays an important role in various cellular processes. This is Phospholipase D alpha 1 (PLD1) from Spuriopimpinella brachycarpa (Chamnamul).